The primary structure comprises 68 residues: Large ribosomal subunit protein bL32 (68 aa).

It belongs to the bacterial ribosomal protein bL32 family.

This Ruegeria pomeroyi (strain ATCC 700808 / DSM 15171 / DSS-3) (Silicibacter pomeroyi) protein is Large ribosomal subunit protein bL32.